The primary structure comprises 214 residues: Histidine biosynthesis bifunctional protein HisIE (214 aa).

Residues 1-125 are phosphoribosyl-AMP cyclohydrolase; it reads MPATALSLPL…ESIEPPPADT (125 aa). Residues 126–214 are phosphoribosyl-ATP pyrophosphohydrolase; the sequence is LSQVYNIVCQ…VYEQLQLRRR (89 aa).

In the N-terminal section; belongs to the PRA-CH family. This sequence in the C-terminal section; belongs to the PRA-PH family.

It is found in the cytoplasm. It catalyses the reaction 1-(5-phospho-beta-D-ribosyl)-ATP + H2O = 1-(5-phospho-beta-D-ribosyl)-5'-AMP + diphosphate + H(+). It carries out the reaction 1-(5-phospho-beta-D-ribosyl)-5'-AMP + H2O = 1-(5-phospho-beta-D-ribosyl)-5-[(5-phospho-beta-D-ribosylamino)methylideneamino]imidazole-4-carboxamide. The protein operates within amino-acid biosynthesis; L-histidine biosynthesis; L-histidine from 5-phospho-alpha-D-ribose 1-diphosphate: step 2/9. Its pathway is amino-acid biosynthesis; L-histidine biosynthesis; L-histidine from 5-phospho-alpha-D-ribose 1-diphosphate: step 3/9. The polypeptide is Histidine biosynthesis bifunctional protein HisIE (Thermosynechococcus vestitus (strain NIES-2133 / IAM M-273 / BP-1)).